Consider the following 340-residue polypeptide: DnaJ homolog subfamily B member 1 (340 aa).

Positions 2–70 (GKDYYQTLGL…REIFDRYGEE (69 aa)) constitute a J domain. Position 307 is a phosphothreonine (threonine 307).

In terms of assembly, interacts with DNAJC3. Interacts with HSF1 (via transactivation domain); this interaction results in the inhibition of heat shock- and HSF1-induced transcriptional activity during the attenuation and recovery phase period of the heat shock response. Interacts with BAG3.

It localises to the cytoplasm. The protein localises to the nucleus. It is found in the nucleolus. In terms of biological role, interacts with HSP70 and can stimulate its ATPase activity. Stimulates the association between HSC70 and HIP. Negatively regulates heat shock-induced HSF1 transcriptional activity during the attenuation and recovery phase period of the heat shock response. Stimulates ATP hydrolysis and the folding of unfolded proteins mediated by HSPA1A/B (in vitro). This is DnaJ homolog subfamily B member 1 (DNAJB1) from Homo sapiens (Human).